The primary structure comprises 178 residues: Cytidylate kinase (178 aa).

ATP is bound at residue 7 to 15; the sequence is GLPGTGTTT.

This sequence belongs to the cytidylate kinase family. Type 2 subfamily.

It localises to the cytoplasm. The catalysed reaction is CMP + ATP = CDP + ADP. The enzyme catalyses dCMP + ATP = dCDP + ADP. This chain is Cytidylate kinase, found in Methanococcus maripaludis (strain C7 / ATCC BAA-1331).